An 88-amino-acid polypeptide reads, in one-letter code: Small ribosomal subunit protein uS15 (88 aa).

This sequence belongs to the universal ribosomal protein uS15 family. In terms of assembly, part of the 30S ribosomal subunit. Forms a bridge to the 50S subunit in the 70S ribosome, contacting the 23S rRNA.

Its function is as follows. One of the primary rRNA binding proteins, it binds directly to 16S rRNA where it helps nucleate assembly of the platform of the 30S subunit by binding and bridging several RNA helices of the 16S rRNA. Functionally, forms an intersubunit bridge (bridge B4) with the 23S rRNA of the 50S subunit in the ribosome. The sequence is that of Small ribosomal subunit protein uS15 from Acidobacterium capsulatum (strain ATCC 51196 / DSM 11244 / BCRC 80197 / JCM 7670 / NBRC 15755 / NCIMB 13165 / 161).